Here is a 298-residue protein sequence, read N- to C-terminus: GTPase Era (298 aa).

One can recognise an Era-type G domain in the interval 8 to 176 (RCGRIAVIGR…VSDLLALLPE (169 aa)). The tract at residues 16 to 23 (GRPNVGKS) is G1. Residue 16–23 (GRPNVGKS) coordinates GTP. The interval 42–46 (QTTRH) is G2. Residues 63-66 (DTPG) form a G3 region. GTP-binding positions include 63–67 (DTPGL) and 125–128 (NKID). The segment at 125 to 128 (NKID) is G4. The G5 stretch occupies residues 155 to 157 (VSA). The KH type-2 domain maps to 199-283 (VREQVMRQLG…FLETWVRVRK (85 aa)).

It belongs to the TRAFAC class TrmE-Era-EngA-EngB-Septin-like GTPase superfamily. Era GTPase family. Monomer.

It localises to the cytoplasm. The protein resides in the cell inner membrane. Functionally, an essential GTPase that binds both GDP and GTP, with rapid nucleotide exchange. Plays a role in 16S rRNA processing and 30S ribosomal subunit biogenesis and possibly also in cell cycle regulation and energy metabolism. In Xylella fastidiosa (strain Temecula1 / ATCC 700964), this protein is GTPase Era.